The chain runs to 334 residues: Phosphoribosylformylglycinamidine cyclo-ligase (334 aa).

This sequence belongs to the AIR synthase family.

The protein localises to the cytoplasm. The enzyme catalyses 2-formamido-N(1)-(5-O-phospho-beta-D-ribosyl)acetamidine + ATP = 5-amino-1-(5-phospho-beta-D-ribosyl)imidazole + ADP + phosphate + H(+). The protein operates within purine metabolism; IMP biosynthesis via de novo pathway; 5-amino-1-(5-phospho-D-ribosyl)imidazole from N(2)-formyl-N(1)-(5-phospho-D-ribosyl)glycinamide: step 2/2. In Thermococcus kodakarensis (strain ATCC BAA-918 / JCM 12380 / KOD1) (Pyrococcus kodakaraensis (strain KOD1)), this protein is Phosphoribosylformylglycinamidine cyclo-ligase.